The chain runs to 446 residues: Maltoporin (446 aa).

An N-terminal signal peptide occupies residues Met-1 to Ala-25.

It belongs to the porin LamB (TC 1.B.3) family. As to quaternary structure, homotrimer formed of three 18-stranded antiparallel beta-barrels, containing three independent channels.

It is found in the cell outer membrane. It carries out the reaction beta-maltose(in) = beta-maltose(out). Its function is as follows. Involved in the transport of maltose and maltodextrins. The polypeptide is Maltoporin (Escherichia coli (strain K12 / MC4100 / BW2952)).